The sequence spans 116 residues: Putative pterin-4-alpha-carbinolamine dehydratase 1 (116 aa).

This sequence belongs to the pterin-4-alpha-carbinolamine dehydratase family.

The enzyme catalyses (4aS,6R)-4a-hydroxy-L-erythro-5,6,7,8-tetrahydrobiopterin = (6R)-L-erythro-6,7-dihydrobiopterin + H2O. The polypeptide is Putative pterin-4-alpha-carbinolamine dehydratase 1 (Gloeobacter violaceus (strain ATCC 29082 / PCC 7421)).